The chain runs to 173 residues: Lens fiber membrane intrinsic protein (173 aa).

At 1-3 (MYS) the chain is on the cytoplasmic side. The helical transmembrane segment at 4–24 (FMGGGLFCAWVGTILLVVAMA) threads the bilayer. Over 25-66 (TDHWMQYRLSGSFAHQGLWRYCLGNKCYLQTDSIAYWNATRA) the chain is Extracellular. Residues Trp-43 and Trp-61 are each glycosylated (C-linked (Man) tryptophan). N-linked (GlcNAc...) asparagine glycosylation is present at Asn-62. The helical transmembrane segment at 67 to 87 (FMILSALCAISGIIMGIMAFA) threads the bilayer. Topologically, residues 88–98 (HQPTFSRISRP) are cytoplasmic. Residues 99–119 (FSAGIMFFSSTLFVVLALAIY) form a helical membrane-spanning segment. Over 120–140 (TGVTVSFLGRRFGDWRFSWSY) the chain is Extracellular. The helical transmembrane segment at 141–161 (ILGWVAVLMTFFAGIFYMCAY) threads the bilayer. The Cytoplasmic portion of the chain corresponds to 162 to 173 (RVHECRRLSTPR). Ser-170 carries the post-translational modification Phosphoserine. Thr-171 is modified (phosphothreonine).

Belongs to the PMP-22/EMP/MP20 family. In terms of assembly, seems to be associated with itself or another lens membrane component via disulfide bonds. As to expression, eye lens specific.

The protein resides in the membrane. In terms of biological role, present in the thicker 16-17 nm junctions of mammalian lens fiber cells, where it may contribute to cell junctional organization. Acts as a receptor for calmodulin. May play an important role in both lens development and cataractogenesis. The polypeptide is Lens fiber membrane intrinsic protein (LIM2) (Homo sapiens (Human)).